Consider the following 3999-residue polypeptide: Hybrid PKS-NRPS synthetase xenE (3999 aa).

In terms of domain architecture, Ketosynthase family 3 (KS3) spans 13 to 449; the sequence is REPIAVVGSG…GTNAHCIIEN (437 aa). Active-site for beta-ketoacyl synthase activity residues include C186, H325, and H369. The 318-residue stretch at 562 to 879 folds into the Malonyl-CoA:ACP transacylase (MAT) domain; sequence VFTGQGAQWP…TGLLNRGKDD (318 aa). The tract at residues 949 to 1084 is N-terminal hotdog fold; sequence NPLLGSRTTD…GRVIVITGET (136 aa). The 305-residue stretch at 949–1253 folds into the PKS/mFAS DH domain; that stretch reads NPLLGSRTTD…VVAFAEQTED (305 aa). The tract at residues 950 to 1252 is dehydratase (DH) domain; sequence PLLGSRTTDV…RVVAFAEQTE (303 aa). The active-site Proton acceptor; for dehydratase activity is the H981. Positions 1099–1253 are C-terminal hotdog fold; sequence LVDIPEDRFY…VVAFAEQTED (155 aa). D1159 acts as the Proton donor; for dehydratase activity in catalysis. Positions 1298-1593 are methyltransferase (cMeT) domain; it reads YMKQLVTLFP…FSGADSPMPE (296 aa). Residues 2133–2306 form the Ketoreductase (KR) domain; the sequence is TYVLFGLTSD…AASILHLGAV (174 aa). A Carrier 1 domain is found at 2414–2495; the sequence is EEILEIVQDA…QLVEYAIGSM (82 aa). At S2455 the chain carries O-(pantetheine 4'-phosphoryl)serine. The interval 2501 to 2573 is disordered; that stretch reads PNRADSAKAS…EESPSESVND (73 aa). The segment covering 2526-2554 has biased composition (low complexity); it reads SVSSSPSSLPKTSASGSSQQMSEGSSKTS. The segment at 2580 to 3015 is condensation; the sequence is EKVLPVSPGQ…EEVSLFTEQE (436 aa). The interval 3045 to 3453 is adenylation; sequence AVHTDKVALK…RIEGDTQIKL (409 aa). Positions 3562–3642 constitute a Carrier 2 domain; it reads RKLTDTESKL…AMAAAIQDTS (81 aa). The residue at position 3602 (S3602) is an O-(pantetheine 4'-phosphoryl)serine. Residues 3681–3900 form a reductase-like (R) domain (R) region; it reads LTGATGFLGK…IDLITVEKAA (220 aa).

It in the C-terminal section; belongs to the NRP synthetase family.

It participates in mycotoxin biosynthesis. Hybrid PKS-NRPS synthetase; part of the gene cluster that mediates the biosynthesis of xenoacremones such as xenoacremone A, a compound that shows inhibitory activity toward the PI3K/AKT signaling pathway and which has the ability to induce apoptosis of A549 lung cancer cells. Within the pathway, cooperation of the hybrid PKS-NRPS xenE and the trans-acting enoyl reductase xenG is responsible for the formation of the reduced tyrosine-nonaketide derivative. The PKS module of xenE acted in combination with the trans-acting enoyl reductase xenG to produce a double-methylated nonaketide attached to the ACP domain. In parallel, the adenylation (A) domain of the NRPS module activated L-tyrosine, which was then transferred to the ACP domain. The condensation (C) domain subsequently linked this group to the polyketide chain, forming an enzyme-bound amide. Reductive release by the C-terminal R domain afforded the aldehyde derivative. The alpha/beta hydrolase xenA then accelerates intramolecular nucleophilic attack to give a pyrrolidone derivative. Subsequently, three enzymes, xenF, xenD, and xenC, coordinately participate in the conversion to xenoacremone B. XenF catalyzes sigmatropic rearrangement to form an A-ring, which leads to an unusual intermediate with a hexane ring, which is required for the formation of the tricarbocyclic product. Epoxidation catalyzed by xenD and the formation of the paracyclophane ether catalyzed by xenC initiate a spontaneous intramolecular Diels-Alder (IMDA) reaction to yield xenoacremone B. Spontaneous hydration of xenoacremone B leads to the formation of xenoacremone A, which undergoes subsequent methylation to afford xenoacremone C. The polypeptide is Hybrid PKS-NRPS synthetase xenE (Xenoacremonium sinensis (Endophyte fungus)).